We begin with the raw amino-acid sequence, 223 residues long: Thiamine-phosphate synthase (223 aa).

Residues Gln47–Lys51 and Asn84 contribute to the 4-amino-2-methyl-5-(diphosphooxymethyl)pyrimidine site. Positions 85 and 104 each coordinate Mg(2+). Ser123 provides a ligand contact to 4-amino-2-methyl-5-(diphosphooxymethyl)pyrimidine. Thr150 to Thr152 is a binding site for 2-[(2R,5Z)-2-carboxy-4-methylthiazol-5(2H)-ylidene]ethyl phosphate. A 4-amino-2-methyl-5-(diphosphooxymethyl)pyrimidine-binding site is contributed by Lys153. A 2-[(2R,5Z)-2-carboxy-4-methylthiazol-5(2H)-ylidene]ethyl phosphate-binding site is contributed by Gly182.

The protein belongs to the thiamine-phosphate synthase family. Mg(2+) serves as cofactor.

It carries out the reaction 2-[(2R,5Z)-2-carboxy-4-methylthiazol-5(2H)-ylidene]ethyl phosphate + 4-amino-2-methyl-5-(diphosphooxymethyl)pyrimidine + 2 H(+) = thiamine phosphate + CO2 + diphosphate. The catalysed reaction is 2-(2-carboxy-4-methylthiazol-5-yl)ethyl phosphate + 4-amino-2-methyl-5-(diphosphooxymethyl)pyrimidine + 2 H(+) = thiamine phosphate + CO2 + diphosphate. It catalyses the reaction 4-methyl-5-(2-phosphooxyethyl)-thiazole + 4-amino-2-methyl-5-(diphosphooxymethyl)pyrimidine + H(+) = thiamine phosphate + diphosphate. It participates in cofactor biosynthesis; thiamine diphosphate biosynthesis; thiamine phosphate from 4-amino-2-methyl-5-diphosphomethylpyrimidine and 4-methyl-5-(2-phosphoethyl)-thiazole: step 1/1. Functionally, condenses 4-methyl-5-(beta-hydroxyethyl)thiazole monophosphate (THZ-P) and 2-methyl-4-amino-5-hydroxymethyl pyrimidine pyrophosphate (HMP-PP) to form thiamine monophosphate (TMP). This chain is Thiamine-phosphate synthase, found in Saccharopolyspora erythraea (strain ATCC 11635 / DSM 40517 / JCM 4748 / NBRC 13426 / NCIMB 8594 / NRRL 2338).